Here is a 2352-residue protein sequence, read N- to C-terminus: Highly reducing polyketide synthase ZEA2 (2352 aa).

In terms of domain architecture, Ketosynthase family 3 (KS3) spans 9–433 (PGPVAIVGLA…GTNGHVVLEA (425 aa)). Active-site for beta-ketoacyl synthase activity residues include Cys181, His316, and His356. The segment at 544–875 (FVFTGQGAQW…LATSLFLQGV (332 aa)) is malonyl-CoA:ACP transacylase (MAT) domain. Ser634 acts as the For malonyltransferase activity in catalysis. Residues 923–1058 (RSIIGAPVPK…GLITIDYEGN (136 aa)) are N-terminal hotdog fold. In terms of domain architecture, PKS/mFAS DH spans 923–1242 (RSIIGAPVPK…TSELEMDGAA (320 aa)). The dehydratase (DH) domain stretch occupies residues 925 to 1237 (IIGAPVPKMN…VIDFRTSELE (313 aa)). The Proton acceptor; for dehydratase activity role is filled by His955. Residues 1086–1242 (PATYAKDRFY…TSELEMDGAA (157 aa)) are C-terminal hotdog fold. The Proton donor; for dehydratase activity role is filled by Asp1152. Residues 1643–1955 (GLLDTLYFVD…QGKHRGKIVL (313 aa)) are enoylreductase (ER) domain. The segment at 1979-2159 (ATYLFVGGLG…VSVNLGIMRD (181 aa)) is catalytic ketoreductase (KRc) domain. Positions 2269 to 2346 (KATEIITNAL…SFAGKLASTS (78 aa)) constitute a Carrier domain. Ser2306 bears the O-(pantetheine 4'-phosphoryl)serine mark.

It functions in the pathway mycotoxin biosynthesis. Highly reducing polyketide synthase; part of the gene cluster that mediates the biosynthesis of zearalenone (ZEA), a nonsteroid estrogen that is a contaminant of cereal grains and causes estrogenic disorders in humans and animals. The ZEA backbone is synthesized from a single acetyl-CoA molecule and eight malonyl-CoA molecules. The reducing polyketide synthase ZEA2 is proposed to synthesize a reduced hexaketide intermediate by using different combinations of its reductive domains during each round of condensation. The hexaketide thioester is then transacylated to the non-reducing polyketide synthase ZEA1 and is further condensed with three malonyl-CoAs without reductive tailoring to yield a mixed reduced/unreduced nonaketide. ZEA1 must be able to interact with ZEA2 to facilitate starter-unit acyltransfer and initiate polyketide biosynthesis. ZEA1 also mediates the required C2-C7 cyclization to form the resorcylate core and catalyzes the formation of the macrolactone. ZEB1 is then responsible for the chemical conversion of beta-zearalenonol (beta-ZOL) to ZEA in the biosynthetic pathway. The polypeptide is Highly reducing polyketide synthase ZEA2 (Gibberella zeae (strain ATCC MYA-4620 / CBS 123657 / FGSC 9075 / NRRL 31084 / PH-1) (Wheat head blight fungus)).